A 325-amino-acid chain; its full sequence is Brain mitochondrial carrier protein 1 (325 aa).

A run of 6 helical transmembrane segments spans residues 38–54 (GLNW…SIVA), 112–128 (LRQA…YQSL), 141–161 (LLIN…IANP), 199–215 (GVVP…GVEL), 240–256 (VSSF…SNPV), and 298–315 (GFWP…IFFI). Solcar repeat units follow at residues 42-131 (KPFV…LKRL), 139-224 (ETLL…TKKH), and 233-323 (DTIL…LKRL).

It belongs to the mitochondrial carrier (TC 2.A.29) family. Homotetramer. In terms of tissue distribution, mainly expressed in brain. Some expression in testis and pituitary.

Its subcellular location is the mitochondrion inner membrane. The enzyme catalyses sulfite(in) + sulfate(out) = sulfite(out) + sulfate(in). The catalysed reaction is thiosulfate(in) + sulfate(out) = thiosulfate(out) + sulfate(in). It catalyses the reaction sulfate(out) + phosphate(in) = sulfate(in) + phosphate(out). It carries out the reaction oxalate(in) + sulfate(out) = oxalate(out) + sulfate(in). The enzyme catalyses malonate(in) + sulfate(out) = malonate(out) + sulfate(in). The catalysed reaction is maleate(in) + sulfate(out) = maleate(out) + sulfate(in). It catalyses the reaction (S)-malate(in) + sulfate(out) = (S)-malate(out) + sulfate(in). It carries out the reaction (3S)-citramalate(in) + sulfate(out) = (3S)-citramalate(out) + sulfate(in). The enzyme catalyses (3R)-citramalate(in) + sulfate(out) = (3R)-citramalate(out) + sulfate(in). The catalysed reaction is sulfate(out) + succinate(in) = sulfate(in) + succinate(out). It catalyses the reaction (S,S)-tartrate(in) + sulfate(out) = (S,S)-tartrate(out) + sulfate(in). It carries out the reaction (2R,3R)-tartrate(in) + sulfate(out) = (2R,3R)-tartrate(out) + sulfate(in). The enzyme catalyses D-aspartate(in) + sulfate(out) = D-aspartate(out) + sulfate(in). The catalysed reaction is L-aspartate(in) + sulfate(out) = L-aspartate(out) + sulfate(in). It catalyses the reaction sulfate(in) = sulfate(out). It carries out the reaction phosphate(in) = phosphate(out). The enzyme catalyses (S)-malate(out) = (S)-malate(in). The catalysed reaction is citrate(in) = citrate(out). It catalyses the reaction L-aspartate(out) = L-aspartate(in). It carries out the reaction L-glutamate(out) = L-glutamate(in). The enzyme catalyses H(+)(in) = H(+)(out). The catalysed reaction is chloride(in) = chloride(out). Its activity is regulated as follows. Increased activity at pH lower than 8.0. sulfate/sulfate exchange activity is inhibited strongly by pyridoxal 5'-phosphate, bathophenanthroline and the organic mercurials mersalyl, p-chloromercuribenzoate and HgCl2. Proton conductance is activated by cardiolipin and long-chain free fatty acids and inhibited by purine nucleotides ATP and ADP. Chloride ion transporter activity is inhibited by long-chain free fatty acids. Transports inorganic anions (sulfate, sulfite, thiosulfate and phosphate) and, to a lesser extent, a variety of dicarboxylates (e.g. malonate, malate and citramalate) and, even more so, aspartate and glutamate and tricarboxylates. May catalyze the export of sulfite and thiosulfate (the hydrogen sulfide degradation products) from the mitochondria, thereby modulating the level of the hydrogen sulfide. Also can mediate a very low unidirectional transport of anions including sulfate, phosphate, (S)-malate, citrate, L-aspartate and L-glutamate. Maintains oxidative balance (through uncoupling activities) and ATP production (by modifying mitochondrial membrane potential). Is able to transport protons across lipid membranes. Also exhibits transmembrane chloride transport activity to a lesser extent. May modify mitochondrial respiratory efficiency and mitochondrial oxidant production. In Homo sapiens (Human), this protein is Brain mitochondrial carrier protein 1.